The sequence spans 204 residues: Large ribosomal subunit protein bL25 (204 aa).

The tract at residues 1 to 20 (MSETYELKAETRDRVGKGSS) is disordered.

This sequence belongs to the bacterial ribosomal protein bL25 family. CTC subfamily. Part of the 50S ribosomal subunit; part of the 5S rRNA/L5/L18/L25 subcomplex. Contacts the 5S rRNA. Binds to the 5S rRNA independently of L5 and L18.

In terms of biological role, this is one of the proteins that binds to the 5S RNA in the ribosome where it forms part of the central protuberance. The chain is Large ribosomal subunit protein bL25 from Rhizobium meliloti (strain 1021) (Ensifer meliloti).